A 330-amino-acid polypeptide reads, in one-letter code: DNA-directed RNA polymerase subunit alpha (330 aa).

Residues 1 to 232 (MAILAFQKPD…YHFMLFSDEK (232 aa)) are alpha N-terminal domain (alpha-NTD). Positions 248 to 330 (EEVLHMRQLL…DISKYKLDKE (83 aa)) are alpha C-terminal domain (alpha-CTD).

It belongs to the RNA polymerase alpha chain family. In terms of assembly, homodimer. The RNAP catalytic core consists of 2 alpha, 1 beta, 1 beta' and 1 omega subunit. When a sigma factor is associated with the core the holoenzyme is formed, which can initiate transcription.

It catalyses the reaction RNA(n) + a ribonucleoside 5'-triphosphate = RNA(n+1) + diphosphate. Functionally, DNA-dependent RNA polymerase catalyzes the transcription of DNA into RNA using the four ribonucleoside triphosphates as substrates. This chain is DNA-directed RNA polymerase subunit alpha, found in Bacteroides fragilis (strain ATCC 25285 / DSM 2151 / CCUG 4856 / JCM 11019 / LMG 10263 / NCTC 9343 / Onslow / VPI 2553 / EN-2).